A 308-amino-acid polypeptide reads, in one-letter code: ADP-L-glycero-D-manno-heptose-6-epimerase (308 aa).

NADP(+) contacts are provided by residues 10-11, 31-32, K38, K53, 75-79, and N92; these read MI, DN, and EGACS. Catalysis depends on Y140, which acts as the Proton acceptor. K144 contacts NADP(+). Position 169 (N169) interacts with substrate. Positions 170 and 178 each coordinate NADP(+). K178 acts as the Proton acceptor in catalysis. Residues S180, H187, 201–204, R209, and Y272 contribute to the substrate site; that span reads FEGS.

This sequence belongs to the NAD(P)-dependent epimerase/dehydratase family. HldD subfamily. In terms of assembly, homopentamer. It depends on NADP(+) as a cofactor.

It catalyses the reaction ADP-D-glycero-beta-D-manno-heptose = ADP-L-glycero-beta-D-manno-heptose. It participates in nucleotide-sugar biosynthesis; ADP-L-glycero-beta-D-manno-heptose biosynthesis; ADP-L-glycero-beta-D-manno-heptose from D-glycero-beta-D-manno-heptose 7-phosphate: step 4/4. In terms of biological role, catalyzes the interconversion between ADP-D-glycero-beta-D-manno-heptose and ADP-L-glycero-beta-D-manno-heptose via an epimerization at carbon 6 of the heptose. The sequence is that of ADP-L-glycero-D-manno-heptose-6-epimerase from Actinobacillus pleuropneumoniae serotype 7 (strain AP76).